A 320-amino-acid polypeptide reads, in one-letter code: Acyl-coenzyme A thioesterase 8 (320 aa).

Catalysis depends on charge relay system residues D233, S255, and Q305. Residues 318–320 carry the Microbody targeting signal motif; the sequence is SKL.

Belongs to the C/M/P thioester hydrolase family. Homodimer. As to expression, ubiquitous.

It is found in the peroxisome matrix. The catalysed reaction is choloyl-CoA + H2O = cholate + CoA + H(+). It carries out the reaction chenodeoxycholoyl-CoA + H2O = chenodeoxycholate + CoA + H(+). The enzyme catalyses acetyl-CoA + H2O = acetate + CoA + H(+). It catalyses the reaction malonyl-CoA + H2O = malonate + CoA + H(+). The catalysed reaction is acetoacetyl-CoA + H2O = acetoacetate + CoA + H(+). It carries out the reaction propanoyl-CoA + H2O = propanoate + CoA + H(+). The enzyme catalyses butanoyl-CoA + H2O = butanoate + CoA + H(+). It catalyses the reaction succinyl-CoA + H2O = succinate + CoA + H(+). The catalysed reaction is glutaryl-CoA + H2O = glutarate + CoA + H(+). It carries out the reaction hexanoyl-CoA + H2O = hexanoate + CoA + H(+). The enzyme catalyses hexanedioyl-CoA + H2O = hexanedioate + CoA + H(+). It catalyses the reaction octanoyl-CoA + H2O = octanoate + CoA + H(+). The catalysed reaction is octanedioyl-CoA + H2O = octanedioate + CoA + H(+). It carries out the reaction decanoyl-CoA + H2O = decanoate + CoA + H(+). The enzyme catalyses decanedioyl-CoA + H2O = decanedioate + CoA + H(+). It catalyses the reaction dodecanoyl-CoA + H2O = dodecanoate + CoA + H(+). The catalysed reaction is dodecanedioyl-CoA + H2O = dodecanedioate + CoA + H(+). It carries out the reaction tetradecanoyl-CoA + H2O = tetradecanoate + CoA + H(+). The enzyme catalyses (9Z)-tetradecenoyl-CoA + H2O = (9Z)-tetradecenoate + CoA + H(+). It catalyses the reaction hexadecanoyl-CoA + H2O = hexadecanoate + CoA + H(+). The catalysed reaction is (9Z)-hexadecenoyl-CoA + H2O = (9Z)-hexadecenoate + CoA + H(+). It carries out the reaction octadecanoyl-CoA + H2O = octadecanoate + CoA + H(+). The enzyme catalyses (9Z)-octadecenoyl-CoA + H2O = (9Z)-octadecenoate + CoA + H(+). It catalyses the reaction (9Z,12Z)-octadecadienoyl-CoA + H2O = (9Z,12Z)-octadecadienoate + CoA + H(+). The catalysed reaction is eicosanoyl-CoA + H2O = eicosanoate + CoA + H(+). It carries out the reaction (5Z,8Z,11Z,14Z)-eicosatetraenoyl-CoA + H2O = (5Z,8Z,11Z,14Z)-eicosatetraenoate + CoA + H(+). The enzyme catalyses 4,8-dimethylnonanoyl-CoA + H2O = 4,8-dimethylnonanoate + CoA + H(+). It catalyses the reaction 2,6-dimethylheptanoyl-CoA + H2O = 2,6-dimethylheptanoate + CoA + H(+). The catalysed reaction is (3S)-3-hydroxy-3-methylglutaryl-CoA + H2O = 3-hydroxy-3-methylglutarate + CoA + H(+). It carries out the reaction 3alpha,7alpha,12alpha-trihydroxy-5beta-cholestan-26-oyl-CoA + H2O = 3alpha,7alpha,12alpha-trihydroxy-5beta-cholestan-26-oate + CoA + H(+). The enzyme catalyses 2-methyloctadecanoyl-CoA + H2O = 2-methyloctadecanoate + CoA + H(+). It catalyses the reaction prostaglandin F2alpha-CoA + H2O = prostaglandin F2alpha + CoA + H(+). It participates in lipid metabolism; fatty acid metabolism. Inhibited by CoASH (IC(50)=10-15 uM). Also inhibited by cysteine-reactive agents. In terms of biological role, catalyzes the hydrolysis of acyl-CoAs into free fatty acids and coenzyme A (CoASH), regulating their respective intracellular levels. Displays no strong substrate specificity with respect to the carboxylic acid moiety of Acyl-CoAs. Hydrolyzes medium length (C2 to C20) straight-chain, saturated and unsaturated acyl-CoAS but is inactive towards substrates with longer aliphatic chains. Moreover, it catalyzes the hydrolysis of CoA esters of bile acids, such as choloyl-CoA and chenodeoxycholoyl-CoA and competes with bile acid CoA:amino acid N-acyltransferase (BAAT). Is also able to hydrolyze CoA esters of dicarboxylic acids. It is involved in the metabolic regulation of peroxisome proliferation. This chain is Acyl-coenzyme A thioesterase 8 (Acot8), found in Mus musculus (Mouse).